The chain runs to 214 residues: Holliday junction branch migration complex subunit RuvA (214 aa).

The segment at 1-63 (MISSLRGTVL…EDSLTLFGFP (63 aa)) is domain I. The interval 64–139 (GPDELRAFEL…KLFVTQPRTR (76 aa)) is domain II. A flexible linker region spans residues 139 to 143 (RSASS). The segment at 144–214 (AASTVTADVV…APAAAQAADR (71 aa)) is domain III.

This sequence belongs to the RuvA family. As to quaternary structure, homotetramer. Forms an RuvA(8)-RuvB(12)-Holliday junction (HJ) complex. HJ DNA is sandwiched between 2 RuvA tetramers; dsDNA enters through RuvA and exits via RuvB. An RuvB hexamer assembles on each DNA strand where it exits the tetramer. Each RuvB hexamer is contacted by two RuvA subunits (via domain III) on 2 adjacent RuvB subunits; this complex drives branch migration. In the full resolvosome a probable DNA-RuvA(4)-RuvB(12)-RuvC(2) complex forms which resolves the HJ.

It is found in the cytoplasm. In terms of biological role, the RuvA-RuvB-RuvC complex processes Holliday junction (HJ) DNA during genetic recombination and DNA repair, while the RuvA-RuvB complex plays an important role in the rescue of blocked DNA replication forks via replication fork reversal (RFR). RuvA specifically binds to HJ cruciform DNA, conferring on it an open structure. The RuvB hexamer acts as an ATP-dependent pump, pulling dsDNA into and through the RuvAB complex. HJ branch migration allows RuvC to scan DNA until it finds its consensus sequence, where it cleaves and resolves the cruciform DNA. The chain is Holliday junction branch migration complex subunit RuvA from Clavibacter sepedonicus (Clavibacter michiganensis subsp. sepedonicus).